The sequence spans 2890 residues: Bifunctional DNA-directed RNA polymerase subunit beta-beta' (2890 aa).

Residues 1–1377 (MSKKIPLKNR…DINIFGDDVD (1377 aa)) are DNA-directed RNA polymerase subunit beta. The segment at 1384–2890 (PIMIKEDDRP…LRALEDNSKF (1507 aa)) is DNA-directed RNA polymerase subunit beta'. 4 residues coordinate Zn(2+): Cys1449, Cys1451, Cys1465, and Cys1468. Residues Asp1849, Asp1851, and Asp1853 each coordinate Mg(2+). The Zn(2+) site is built by Cys2179, Cys2253, Cys2260, and Cys2263.

The protein in the N-terminal section; belongs to the RNA polymerase beta chain family. It in the C-terminal section; belongs to the RNA polymerase beta' chain family. As to quaternary structure, the RNAP catalytic core consists of 2 alpha, 1 beta/beta' and 1 omega subunit. When a sigma factor is associated with the core the holoenzyme is formed, which can initiate transcription. The cofactor is Mg(2+). Zn(2+) serves as cofactor.

It catalyses the reaction RNA(n) + a ribonucleoside 5'-triphosphate = RNA(n+1) + diphosphate. In terms of biological role, DNA-dependent RNA polymerase catalyzes the transcription of DNA into RNA using the four ribonucleoside triphosphates as substrates. The chain is Bifunctional DNA-directed RNA polymerase subunit beta-beta' (rpoBC) from Helicobacter pylori (strain J99 / ATCC 700824) (Campylobacter pylori J99).